Here is a 146-residue protein sequence, read N- to C-terminus: Hemoglobin subunit beta-1 (146 aa).

Ser-1 carries the post-translational modification N-acetylserine. Residues 2–146 (FLSAEEKGLV…VASALAHRYH (145 aa)) form the Globin domain. Lys-17 is modified (N6-succinyllysine). A phosphoserine mark is found at Ser-44 and Ser-50. Position 59 is an N6-succinyllysine (Lys-59). Residues His-63 and His-92 each coordinate heme b. Asymmetric dimethylarginine is present on Arg-104.

This sequence belongs to the globin family. As to quaternary structure, heterotetramer of two alpha chains and two beta chains. Red blood cells.

Functionally, involved in oxygen transport from the lung to the various peripheral tissues. In Panthera leo (Lion), this protein is Hemoglobin subunit beta-1 (HBB1).